Consider the following 356-residue polypeptide: Delta(7)-sterol 5(6)-desaturase (356 aa).

Helical transmembrane passes span 87 to 107, 134 to 154, and 171 to 191; these read LTLY…FAGL, QANI…LAEV, and WYDY…IYWI. Residues 179-303 enclose the Fatty acid hydroxylase domain; it reads FFIAFTDLCI…FTTLWDRLGG (125 aa). The Histidine box-1 motif lies at 192–196; the sequence is HRGLH. Residues 205-209 carry the Histidine box-2 motif; it reads HKPHH. Residues 235 to 255 traverse the membrane as a helical segment; sequence YIFPFLFPLSKIASVAFFVFV. A Histidine box-3 motif is present at residues 280-284; the sequence is HTMHH.

The protein belongs to the sterol desaturase family. Fe cation is required as a cofactor.

It is found in the endoplasmic reticulum membrane. The catalysed reaction is a Delta(7)-sterol + 2 Fe(II)-[cytochrome b5] + O2 + 2 H(+) = a Delta(5),Delta(7)-sterol + 2 Fe(III)-[cytochrome b5] + 2 H2O. It functions in the pathway steroid metabolism; ergosterol biosynthesis; ergosterol from zymosterol: step 3/5. In terms of biological role, catalyzes the introduction of a C-5 double bond in the B ring of ergosterol. May contribute to the regulation of ergosterol biosynthesis. In Leptosphaeria maculans (Blackleg fungus), this protein is Delta(7)-sterol 5(6)-desaturase (ERG3).